The chain runs to 200 residues: SKP1-like protein 19 (200 aa).

Positions aspartate 67–aspartate 92 are enriched in basic and acidic residues. Residues aspartate 67 to lysine 109 form a disordered region. The segment at isoleucine 132 to glutamate 190 is interaction with the F-box domain of F-box proteins.

The protein belongs to the SKP1 family. In terms of assembly, part of a SCF (SKP1-cullin-F-box) protein ligase complex. Interacts with CPR1/CPR30. As to expression, expressed in leaves and flowers.

The protein localises to the nucleus. It functions in the pathway protein modification; protein ubiquitination. Involved in ubiquitination and subsequent proteasomal degradation of target proteins. Together with CUL1, RBX1 and a F-box protein, it forms a SCF E3 ubiquitin ligase complex. The functional specificity of this complex depends on the type of F-box protein. In the SCF complex, it serves as an adapter that links the F-box protein to CUL1. This Arabidopsis thaliana (Mouse-ear cress) protein is SKP1-like protein 19 (ASK19).